The chain runs to 158 residues: Endoribonuclease YbeY (158 aa).

Residues His119, His123, and His129 each contribute to the Zn(2+) site.

This sequence belongs to the endoribonuclease YbeY family. The cofactor is Zn(2+).

The protein localises to the cytoplasm. Single strand-specific metallo-endoribonuclease involved in late-stage 70S ribosome quality control and in maturation of the 3' terminus of the 16S rRNA. This chain is Endoribonuclease YbeY, found in Acinetobacter baumannii (strain SDF).